Here is a 460-residue protein sequence, read N- to C-terminus: Cysteine--tRNA ligase (460 aa).

A Zn(2+)-binding site is contributed by Cys-27. The 'HIGH' region motif lies at Pro-29 to Asn-39. Residues Cys-207, His-232, and Glu-236 each coordinate Zn(2+). Positions Lys-264 to Ser-268 match the 'KMSKS' region motif. Lys-267 is an ATP binding site.

This sequence belongs to the class-I aminoacyl-tRNA synthetase family. As to quaternary structure, monomer. Requires Zn(2+) as cofactor.

The protein resides in the cytoplasm. It carries out the reaction tRNA(Cys) + L-cysteine + ATP = L-cysteinyl-tRNA(Cys) + AMP + diphosphate. This Thermotoga maritima (strain ATCC 43589 / DSM 3109 / JCM 10099 / NBRC 100826 / MSB8) protein is Cysteine--tRNA ligase (cysS).